Consider the following 1216-residue polypeptide: ATP-dependent DNA helicase Q4 (1216 aa).

Disordered stretches follow at residues 72 to 100 and 113 to 171; these read EAQEPSCWGPHLSRAATQNTQSMPKQSLL and NLKN…PRLG. 2 stretches are compositionally biased toward polar residues: residues 86–100 and 114–137; these read AATQNTQSMPKQSLL and LKNTTQTGPTQSRKLQLQKRSLST. A phosphoserine mark is found at S179 and S181. Residues 235–340 are disordered; it reads SEVSVQSPEA…LHASPRPASL (106 aa). 2 stretches are compositionally biased toward polar residues: residues 248–262 and 306–320; these read QPAQVLSQSPKSINS and TQVNVPQPCNSSNQA. The segment at 393-410 adopts a CCHC-type zinc-finger fold; sequence DTCFRCGQFGHWASQCSQ. The interval 436-458 is disordered; it reads AQRTGTASCHHSGEETQPAAPEL. Residues 506–684 enclose the Helicase ATP-binding domain; it reads IMRILSGIST…AQHLGIAGEF (179 aa). 519–526 serves as a coordination point for ATP; it reads LPTGAGKS. The DEAH box signature appears at 627–630; sequence DEVH. In terms of domain architecture, Helicase C-terminal spans 705–872; that stretch reads DSDQALVTLL…AVKRLVQRVF (168 aa). 4 residues coordinate Zn(2+): C875, C877, C906, and H909.

The protein belongs to the helicase family. RecQ subfamily. As to quaternary structure, interacts with UBR1 and UBR2. Interacts with MCM10; this interaction regulates RECQL4 unwinding activity. Interacts with TOPBP1. The cofactor is Zn(2+).

The protein resides in the cytoplasm. The protein localises to the nucleus. It carries out the reaction Couples ATP hydrolysis with the unwinding of duplex DNA by translocating in the 3'-5' direction.. It catalyses the reaction ATP + H2O = ADP + phosphate + H(+). In terms of biological role, an ATP-dependent DNA helicase which unwinds dsDNA with a 3'-overhang in a 3'-5' direction. May play a role in development of the palate and the limbs. May modulate chromosome segregation. The sequence is that of ATP-dependent DNA helicase Q4 (Recql4) from Mus musculus (Mouse).